Consider the following 82-residue polypeptide: Penaeidin-3i (82 aa).

An N-terminal signal peptide occupies residues 1 to 19 (MRLVVCLVFLASFALVCQG). Residue Gln-20 is modified to Pyrrolidone carboxylic acid. 2 cysteine pairs are disulfide-bonded: Cys-55–Cys-73 and Cys-67–Cys-74. Ser-81 bears the Serine amide mark.

It belongs to the penaeidin family.

The protein localises to the cytoplasmic granule. In terms of biological role, antibacterial and antifungal activity. Presents chitin-binding activity. This is Penaeidin-3i from Penaeus vannamei (Whiteleg shrimp).